The primary structure comprises 38 residues: Large ribosomal subunit protein bL36 (38 aa).

Belongs to the bacterial ribosomal protein bL36 family.

The chain is Large ribosomal subunit protein bL36 from Phytoplasma australiense.